The primary structure comprises 462 residues: Argininosuccinate lyase (462 aa).

The protein belongs to the lyase 1 family. Argininosuccinate lyase subfamily.

The protein localises to the cytoplasm. It carries out the reaction 2-(N(omega)-L-arginino)succinate = fumarate + L-arginine. Its pathway is amino-acid biosynthesis; L-arginine biosynthesis; L-arginine from L-ornithine and carbamoyl phosphate: step 3/3. The protein is Argininosuccinate lyase of Bacillus cytotoxicus (strain DSM 22905 / CIP 110041 / 391-98 / NVH 391-98).